The chain runs to 160 residues: Seed allergenic protein RA5 (160 aa).

An N-terminal signal peptide occupies residues 1 to 26; that stretch reads MASNKVVFSVLLLAVVSVLAATATMA. 5 disulfide bridges follow: C42–C92, C56–C80, C64–C124, C81–C140, and C94–C152.

Belongs to the protease inhibitor I6 (cereal trypsin/alpha-amylase inhibitor) family. Post-translationally, five disulfide bonds are present.

It is found in the secreted. In terms of biological role, seed storage protein. This is Seed allergenic protein RA5 (RA5) from Oryza sativa subsp. japonica (Rice).